A 573-amino-acid chain; its full sequence is 2-succinyl-5-enolpyruvyl-6-hydroxy-3-cyclohexene-1-carboxylate synthase (573 aa).

Belongs to the TPP enzyme family. MenD subfamily. In terms of assembly, homodimer. The cofactor is Mg(2+). It depends on Mn(2+) as a cofactor. Thiamine diphosphate is required as a cofactor.

It catalyses the reaction isochorismate + 2-oxoglutarate + H(+) = 5-enolpyruvoyl-6-hydroxy-2-succinyl-cyclohex-3-ene-1-carboxylate + CO2. The protein operates within quinol/quinone metabolism; 1,4-dihydroxy-2-naphthoate biosynthesis; 1,4-dihydroxy-2-naphthoate from chorismate: step 2/7. It participates in quinol/quinone metabolism; menaquinone biosynthesis. Its function is as follows. Catalyzes the thiamine diphosphate-dependent decarboxylation of 2-oxoglutarate and the subsequent addition of the resulting succinic semialdehyde-thiamine pyrophosphate anion to isochorismate to yield 2-succinyl-5-enolpyruvyl-6-hydroxy-3-cyclohexene-1-carboxylate (SEPHCHC). This chain is 2-succinyl-5-enolpyruvyl-6-hydroxy-3-cyclohexene-1-carboxylate synthase, found in Shewanella baltica (strain OS185).